The following is a 263-amino-acid chain: MNPNCARCGKIVYPTEKVNCLDKYWHKACFHCETCKMTLNMKNYKGYEKKPYCNAHYPKQSFTMVADTPENLRLKQQSELQSQVRYKEEFEKNKGKGFSVVADTPELQRIKKTQDQISNIKYHEEFEKSRMGPSGGEGVEPERREAQDSSSYRRPTEQQQPQPHHIPTSAPVYQQPQQQQMTSSYGGYKEPAAPVSIQRSAPGGGGKRYRAVYDYSAADEDEVSFQDGDTIVNVQQIDDGWMYGTVERTGDTGMLPANYVEAI.

Methionine 1 is subject to N-acetylmethionine. An LIM zinc-binding domain is found at 5-56; the sequence is CARCGKIVYPTEKVNCLDKYWHKACFHCETCKMTLNMKNYKGYEKKPYCNAH. Lysine 42 carries the N6-acetyllysine modification. Nebulin repeat units follow at residues 61-95 and 97-131; these read SFTM…KNKG and GFSV…KSRM. A Phosphothreonine modification is found at threonine 68. The residue at position 75 (lysine 75) is an N6-methyllysine. Phosphoserine is present on serine 99. The residue at position 104 (threonine 104) is a Phosphothreonine. An N6-succinyllysine modification is found at lysine 112. Residues serine 118 and serine 134 each carry the phosphoserine modification. Residues 123–207 form a disordered region; the sequence is HEEFEKSRMG…QRSAPGGGGK (85 aa). The span at 148-162 shows a compositional bias: polar residues; that stretch reads DSSSYRRPTEQQQPQ. Threonine 156 carries the phosphothreonine; by PKA modification. The 60-residue stretch at 204–263 folds into the SH3 domain; that stretch reads GGGKRYRAVYDYSAADEDEVSFQDGDTIVNVQQIDDGWMYGTVERTGDTGMLPANYVEAI.

As to quaternary structure, interacts with F-actin. Interacts with KBTBD10. Interacts with ANKRD54.

The protein resides in the cytoplasm. The protein localises to the cell cortex. It is found in the cytoskeleton. In terms of biological role, plays an important role in the regulation of dynamic actin-based, cytoskeletal activities. Agonist-dependent changes in LASP1 phosphorylation may also serve to regulate actin-associated ion transport activities, not only in the parietal cell but also in certain other F-actin-rich secretory epithelial cell types. The sequence is that of LIM and SH3 domain protein 1 (Lasp1) from Mus musculus (Mouse).